The sequence spans 795 residues: uncharacterized protein (795 aa).

This is an uncharacterized protein from Methanocaldococcus jannaschii (strain ATCC 43067 / DSM 2661 / JAL-1 / JCM 10045 / NBRC 100440) (Methanococcus jannaschii).